A 730-amino-acid chain; its full sequence is Wall-associated receptor kinase-like 1 (730 aa).

The signal sequence occupies residues 1–25 (MKTKTSIFQFIVASVLTLLINDSSA). At 26–358 (ATPPPPISNS…KPTKPPVLQG (333 aa)) the chain is on the extracellular side. N-linked (GlcNAc...) asparagine glycans are attached at residues asparagine 34, asparagine 40, asparagine 70, asparagine 77, asparagine 92, asparagine 119, asparagine 132, asparagine 211, asparagine 233, asparagine 269, and asparagine 281. Positions 282–341 (CSCEYDYFSGMSYRNCYCDYGYTGNPYLRGGCVDTDSCEGNHNCGEDAHCVNMPGPMSMC) are atypical EGF-like. 3 cysteine pairs are disulfide-bonded: cysteine 284–cysteine 297, cysteine 319–cysteine 331, and cysteine 325–cysteine 341. The chain crosses the membrane as a helical span at residues 359 to 379 (ILIGLSGLVFFVGLFWLFKLI). Over 380–730 (KKRRNINRSK…DQPMAINNKR (351 aa)) the chain is Cytoplasmic. Residues 429–702 (FSIDRVLGQG…KEVSNELERI (274 aa)) form the Protein kinase domain. Residues 435–443 (LGQGGQGTV) and lysine 457 each bind ATP. Phosphotyrosine is present on tyrosine 502. The active-site Proton acceptor is the aspartate 554. A phosphothreonine mark is found at threonine 588 and threonine 593. A Phosphotyrosine modification is found at tyrosine 601. Residues 685–730 (KGKNRPNMKEVSNELERIRSSPEDLDVRTENEDEEEDQPMAINNKR) form a disordered region. Positions 691 to 714 (NMKEVSNELERIRSSPEDLDVRTE) are enriched in basic and acidic residues.

This sequence belongs to the protein kinase superfamily. Ser/Thr protein kinase family. In terms of tissue distribution, preferentially expressed in roots and flowers.

The protein localises to the membrane. It catalyses the reaction L-seryl-[protein] + ATP = O-phospho-L-seryl-[protein] + ADP + H(+). The catalysed reaction is L-threonyl-[protein] + ATP = O-phospho-L-threonyl-[protein] + ADP + H(+). Functionally, serine/threonine-protein kinase that may function as a signaling receptor of extracellular matrix component. This Arabidopsis thaliana (Mouse-ear cress) protein is Wall-associated receptor kinase-like 1 (WAKL1).